A 158-amino-acid chain; its full sequence is MKCPYCGYPDSKVIDSRPTDDNTSIRRRRECLKCGKRFTTYEKVEQLPILVIKKDNRREVYDRDKILKGMIKACEKRPVPIKVLEEITDEIDKRIINSMEREITSTEIGEMVMEKLKNVDEVAYVRFASVYRQFKDINTFMDELKKLLKESETKKENA.

A zinc finger spans residues 3–34; it reads CPYCGYPDSKVIDSRPTDDNTSIRRRRECLKC. The ATP-cone domain maps to 49 to 139; it reads ILVIKKDNRR…VYRQFKDINT (91 aa).

It belongs to the NrdR family. Zn(2+) serves as cofactor.

In terms of biological role, negatively regulates transcription of bacterial ribonucleotide reductase nrd genes and operons by binding to NrdR-boxes. This Thermoanaerobacter sp. (strain X514) protein is Transcriptional repressor NrdR.